Consider the following 104-residue polypeptide: Large ribosomal subunit protein uL24 (104 aa).

The protein belongs to the universal ribosomal protein uL24 family. As to quaternary structure, part of the 50S ribosomal subunit.

Its function is as follows. One of two assembly initiator proteins, it binds directly to the 5'-end of the 23S rRNA, where it nucleates assembly of the 50S subunit. One of the proteins that surrounds the polypeptide exit tunnel on the outside of the subunit. The chain is Large ribosomal subunit protein uL24 from Baumannia cicadellinicola subsp. Homalodisca coagulata.